The following is an 89-amino-acid chain: Small ribosomal subunit protein uS15 (89 aa).

Over residues 1–21 (MALSPEKKNEIIENFKTHEGD) the composition is skewed to basic and acidic residues. Positions 1-23 (MALSPEKKNEIIENFKTHEGDTG) are disordered.

Belongs to the universal ribosomal protein uS15 family. In terms of assembly, part of the 30S ribosomal subunit. Forms a bridge to the 50S subunit in the 70S ribosome, contacting the 23S rRNA.

Its function is as follows. One of the primary rRNA binding proteins, it binds directly to 16S rRNA where it helps nucleate assembly of the platform of the 30S subunit by binding and bridging several RNA helices of the 16S rRNA. Functionally, forms an intersubunit bridge (bridge B4) with the 23S rRNA of the 50S subunit in the ribosome. The chain is Small ribosomal subunit protein uS15 from Desulforamulus reducens (strain ATCC BAA-1160 / DSM 100696 / MI-1) (Desulfotomaculum reducens).